A 632-amino-acid chain; its full sequence is MHTKILLPSCILLLLLFTLSSLDVVVAKDGDESGNPFTPKGYLIRYWNKHVSNDLPKPWFLLNKASPLNAAQYATYTKLVADQNAFTTHLQSFCSSANLMCALDLLPSLEKHKGDVHFVSYGDKNFTNYGTKESGLGFNSFKNYTEEENFPVNSFRRYGRDSPHDNQFDNYGAPGGNTPVQSFNSYSTNTPGGSGQFTNYAPGSNVPDLHFTSYSDHGTGGEQDFKSYGNDGNAGQQSFKSYGKDGNGADSQFTTYGNNTNVDGSDFTNYGEAANGENQNFTSYGFNGNNPASSFNNYGVGGNGPSEAFNSYRDQSNVGDDTFTTYVKDANGGEANFTNYGQSFNEGTDVFTTYGKGGNDPHINFKTYGVNNTFKDYVKDTATFSNYHNKTSQDLASLSEVNGGKKVNNRWIEPGKFFREKMLKSGTIMPMPDIKDKMPKRSFLPRAIAAKLPFSTSKIDELKKIFHAANDSQVAKMIGDALSECERAPSPGETKQCVNSAEDMIDFATSVLGRNVVVRTTENTNGSKGNIMIGSIKGINGGKVTKSVSCHQTLYPSLLYYCHSVPKVRVYEADILDPNSKAKINHGVAICHVDTSSWGPRHGAFVALGSGPGKIEVCHWIFENDMTWATAD.

Positions 1–27 are cleaved as a signal peptide; the sequence is MHTKILLPSCILLLLLFTLSSLDVVVA. Positions 28 to 109 are excised as a propeptide; that stretch reads KDGDESGNPF…MCALDLLPSL (82 aa). N-linked (GlcNAc...) asparagine glycosylation is found at asparagine 125, asparagine 143, asparagine 258, asparagine 280, asparagine 336, asparagine 371, and asparagine 389. Positions 417–631 constitute a BURP domain; that stretch reads FFREKMLKSG…FENDMTWATA (215 aa).

In terms of assembly, interacts with polygalacturonase to form heterodimers.

The protein localises to the secreted. It localises to the extracellular space. Its subcellular location is the apoplast. The protein resides in the cell wall. Its function is as follows. Non-catalytic subunit of polygalacturonase. The polypeptide is Polygalacturonase non-catalytic subunit AroGP3 (GP3) (Solanum lycopersicum (Tomato)).